Reading from the N-terminus, the 235-residue chain is Peptidase E (235 aa).

Residues Ser-122, Asp-137, and His-159 each act as charge relay system in the active site.

This sequence belongs to the peptidase S51 family.

The protein localises to the cytoplasm. It carries out the reaction Dipeptidase E catalyzes the hydrolysis of dipeptides Asp-|-Xaa. It does not act on peptides with N-terminal Glu, Asn or Gln, nor does it cleave isoaspartyl peptides.. In terms of biological role, hydrolyzes dipeptides containing N-terminal aspartate residues. May play a role in allowing the cell to use peptide aspartate to spare carbon otherwise required for the synthesis of the aspartate family of amino acids. The chain is Peptidase E from Shewanella denitrificans (strain OS217 / ATCC BAA-1090 / DSM 15013).